A 293-amino-acid polypeptide reads, in one-letter code: Iron-sulfur cluster transfer protein Nubpl (293 aa).

A CXXC motif probably involved in coordinating iron-sulfur cluster binding region spans residues 214-217 (CQNC).

The protein belongs to the Mrp/NBP35 ATP-binding proteins family. Homodimer; dimerization is not reliant on iron-sulfur cluster binding. [4Fe-4S] cluster is required as a cofactor.

The protein resides in the mitochondrion membrane. Iron-sulfur cluster transfer protein involved in the assembly of the mitochondrial membrane respiratory chain NADH dehydrogenase (Complex I). May deliver one or more Fe-S clusters to complex I subunits. Alleviates pausing in mitochondrial DNA (mtDNA) replication at slow zone 2. May be involved in mtDNA-helicase-mediated mtDNA unwinding and replication by transferring iron-sulfur clusters. The protein is Iron-sulfur cluster transfer protein Nubpl of Drosophila melanogaster (Fruit fly).